A 606-amino-acid polypeptide reads, in one-letter code: DNA primase (606 aa).

A CHC2-type zinc finger spans residues 40 to 64 (CPFHQEKTPSFYVVPEKRFYFCHGC). A Toprim domain is found at 256–349 (KAAVLVEGYF…DPDTFARREG (94 aa)). Residues Glu262, Asp307, and Asp309 each coordinate Mg(2+). Positions 429–451 (VPLPKPAGGDAPPSSPNRPAPPL) are disordered. Over residues 441 to 451 (PSSPNRPAPPL) the composition is skewed to pro residues.

It belongs to the DnaG primase family. Monomer. Interacts with DnaB. Zn(2+) serves as cofactor. Mg(2+) is required as a cofactor.

The catalysed reaction is ssDNA + n NTP = ssDNA/pppN(pN)n-1 hybrid + (n-1) diphosphate.. Its function is as follows. RNA polymerase that catalyzes the synthesis of short RNA molecules used as primers for DNA polymerase during DNA replication. The sequence is that of DNA primase from Myxococcus xanthus.